The chain runs to 109 residues: Flagellar hook-basal body complex protein FliE (109 aa).

This sequence belongs to the FliE family.

Its subcellular location is the bacterial flagellum basal body. This chain is Flagellar hook-basal body complex protein FliE, found in Pseudomonas fluorescens (strain Pf0-1).